Reading from the N-terminus, the 669-residue chain is Histone-lysine N-methyltransferase, H3 lysine-9 specific SUVH3 (669 aa).

Disordered regions lie at residues 56–127 (YSSF…EKKT) and 270–290 (ESLI…ASDQ). Polar residues-rich tracts occupy residues 65-82 (QQPT…NTPI) and 93-107 (RTPT…SSGT). Residues 108–120 (KRGVGRPKGTTSV) constitute a DNA-binding region (a.T hook). The region spanning 208–355 (GTVPGIEVGD…CNTFKYKLVR (148 aa)) is the YDG domain. The Pre-SET domain maps to 430-491 (IGCSCSGSCS…SCKNRVIQTG (62 aa)). Residues Cys-432, Cys-434, Cys-438, Cys-445, Cys-447, Cys-473, Cys-477, Cys-479, and Cys-483 each coordinate Zn(2+). The 145-residue stretch at 494–638 (SRLEVFKTRN…PMAELTYDYG (145 aa)) folds into the SET domain. Residues 504-506 (RGW), Asp-540, Tyr-542, Arg-592, and 595-596 (NH) contribute to the S-adenosyl-L-methionine site. Zn(2+) is bound by residues Cys-598, Cys-657, Cys-659, and Cys-664. In terms of domain architecture, Post-SET spans 653 to 669 (GQRTCLCGSEQCRGSFG).

This sequence belongs to the class V-like SAM-binding methyltransferase superfamily. Histone-lysine methyltransferase family. Suvar3-9 subfamily. As to expression, expressed in leaves stems and flowers.

It is found in the nucleus. The protein resides in the chromosome. It localises to the centromere. It carries out the reaction L-lysyl(9)-[histone H3] + S-adenosyl-L-methionine = N(6)-methyl-L-lysyl(9)-[histone H3] + S-adenosyl-L-homocysteine + H(+). Histone methyltransferase. Methylates 'Lys-9' of histone H3. H3 'Lys-9' methylation represents a specific tag for epigenetic transcriptional repression. This is Histone-lysine N-methyltransferase, H3 lysine-9 specific SUVH3 (SUVH3) from Arabidopsis thaliana (Mouse-ear cress).